A 322-amino-acid chain; its full sequence is Transmembrane protein 171 (322 aa).

The next 4 membrane-spanning stretches (helical) occupy residues 22-42 (IFFLFVFGAALLCVGVLLSIF), 57-77 (IVLKIAGPSCAVVGLGAVILA), 112-132 (LIFGFLFLTSGMLISILGIWV), and 159-179 (FLSLQIMGPLVVLVGLCFFVV). The segment at 223-322 (PPPYFPESSA…LGAPSDASPP (100 aa)) is disordered. Positions 228–241 (PESSAAAPSPGANS) are enriched in low complexity. Composition is skewed to polar residues over residues 242-267 (LHQIENPPSYSSLFNYGTPTPENQGA) and 279-289 (ISGQGSSSERS).

Its subcellular location is the membrane. This chain is Transmembrane protein 171 (Tmem171), found in Mus musculus (Mouse).